The primary structure comprises 513 residues: 2-isopropylmalate synthase (513 aa).

The Pyruvate carboxyltransferase domain occupies 7–269 (VYIFDTTLRD…TTGIVTEELF (263 aa)). Residues aspartate 16, histidine 204, histidine 206, and asparagine 240 each coordinate Mn(2+). The regulatory domain stretch occupies residues 393–513 (ALQFLSVHCG…KEEERTCPQL (121 aa)).

Belongs to the alpha-IPM synthase/homocitrate synthase family. LeuA type 1 subfamily. Homodimer. The cofactor is Mn(2+).

It is found in the cytoplasm. The catalysed reaction is 3-methyl-2-oxobutanoate + acetyl-CoA + H2O = (2S)-2-isopropylmalate + CoA + H(+). The protein operates within amino-acid biosynthesis; L-leucine biosynthesis; L-leucine from 3-methyl-2-oxobutanoate: step 1/4. In terms of biological role, catalyzes the condensation of the acetyl group of acetyl-CoA with 3-methyl-2-oxobutanoate (2-ketoisovalerate) to form 3-carboxy-3-hydroxy-4-methylpentanoate (2-isopropylmalate). This Solidesulfovibrio magneticus (strain ATCC 700980 / DSM 13731 / RS-1) (Desulfovibrio magneticus) protein is 2-isopropylmalate synthase.